A 47-amino-acid polypeptide reads, in one-letter code: Defensin-like protein 2 (47 aa).

4 disulfides stabilise this stretch: cysteine 3–cysteine 47, cysteine 14–cysteine 36, cysteine 20–cysteine 41, and cysteine 24–cysteine 43.

The protein belongs to the DEFL family.

The polypeptide is Defensin-like protein 2 (Zea mays (Maize)).